The sequence spans 213 residues: Orotate phosphoribosyltransferase (213 aa).

Position 26 (Lys26) interacts with 5-phospho-alpha-D-ribose 1-diphosphate. Residue 34–35 coordinates orotate; that stretch reads FF. 5-phospho-alpha-D-ribose 1-diphosphate-binding positions include 72–73, Arg99, Lys100, Lys103, His105, and 124–132; these read YK and DDVITAGTA. Orotate-binding residues include Thr128 and Arg156.

It belongs to the purine/pyrimidine phosphoribosyltransferase family. PyrE subfamily. As to quaternary structure, homodimer. Mg(2+) serves as cofactor.

The enzyme catalyses orotidine 5'-phosphate + diphosphate = orotate + 5-phospho-alpha-D-ribose 1-diphosphate. It participates in pyrimidine metabolism; UMP biosynthesis via de novo pathway; UMP from orotate: step 1/2. Functionally, catalyzes the transfer of a ribosyl phosphate group from 5-phosphoribose 1-diphosphate to orotate, leading to the formation of orotidine monophosphate (OMP). The chain is Orotate phosphoribosyltransferase from Haemophilus influenzae (strain ATCC 51907 / DSM 11121 / KW20 / Rd).